The following is a 196-amino-acid chain: UPF0316 protein LBL_2483 (196 aa).

Helical transmembrane passes span 12–32, 44–64, and 70–90; these read YCVL…IGTI, IAAS…TQVI, and ALCY…GMIL.

Belongs to the UPF0316 family.

The protein resides in the cell membrane. In Leptospira borgpetersenii serovar Hardjo-bovis (strain L550), this protein is UPF0316 protein LBL_2483.